Consider the following 324-residue polypeptide: Clavaminate synthase 1 (324 aa).

H144, E146, and H279 together coordinate Fe cation. R293 provides a ligand contact to 2-oxoglutarate.

The protein belongs to the clavaminate synthase family. Requires Fe(2+) as cofactor.

It carries out the reaction deoxyamidinoproclavaminate + 2-oxoglutarate + O2 = amidinoproclavaminate + succinate + CO2. The enzyme catalyses proclavaminate + 2-oxoglutarate + O2 = dihydroclavaminate + succinate + CO2 + H2O. It catalyses the reaction dihydroclavaminate + 2-oxoglutarate + O2 = clavaminate + succinate + CO2 + H2O. Its pathway is antibiotic biosynthesis; clavulanate biosynthesis; clavulanate from D-glyceraldehyde 3-phosphate and L-arginine: step 3/8. It participates in antibiotic biosynthesis; clavulanate biosynthesis; clavulanate from D-glyceraldehyde 3-phosphate and L-arginine: step 5/8. The protein operates within antibiotic biosynthesis; clavulanate biosynthesis; clavulanate from D-glyceraldehyde 3-phosphate and L-arginine: step 6/8. The sequence is that of Clavaminate synthase 1 (cs1) from Streptomyces clavuligerus.